A 130-amino-acid polypeptide reads, in one-letter code: Small ribosomal subunit protein uS11 (130 aa).

Belongs to the universal ribosomal protein uS11 family. As to quaternary structure, part of the 30S ribosomal subunit. Interacts with proteins S7 and S18. Binds to IF-3.

Functionally, located on the platform of the 30S subunit, it bridges several disparate RNA helices of the 16S rRNA. Forms part of the Shine-Dalgarno cleft in the 70S ribosome. The chain is Small ribosomal subunit protein uS11 from Buchnera aphidicola subsp. Cinara cedri (strain Cc).